Here is a 427-residue protein sequence, read N- to C-terminus: Enolase (427 aa).

Position 163 (Gln-163) interacts with (2R)-2-phosphoglycerate. The active-site Proton donor is Glu-205. Residues Asp-242, Glu-285, and Asp-312 each contribute to the Mg(2+) site. The (2R)-2-phosphoglycerate site is built by Lys-337, Arg-366, Ser-367, and Lys-388. The Proton acceptor role is filled by Lys-337.

Belongs to the enolase family. Requires Mg(2+) as cofactor.

Its subcellular location is the cytoplasm. The protein localises to the secreted. The protein resides in the cell surface. The enzyme catalyses (2R)-2-phosphoglycerate = phosphoenolpyruvate + H2O. It participates in carbohydrate degradation; glycolysis; pyruvate from D-glyceraldehyde 3-phosphate: step 4/5. Catalyzes the reversible conversion of 2-phosphoglycerate (2-PG) into phosphoenolpyruvate (PEP). It is essential for the degradation of carbohydrates via glycolysis. The protein is Enolase of Beijerinckia indica subsp. indica (strain ATCC 9039 / DSM 1715 / NCIMB 8712).